We begin with the raw amino-acid sequence, 563 residues long: PHD finger protein EHD3 (563 aa).

Positions 1–46 (MGSQNRPPPPRKRQPPPPEDHLVTYKRRRSKETQPLPLMANGANSK) are disordered. PHD-type zinc fingers lie at residues 296 to 348 (LCPC…CSFK), 420 to 472 (SNLC…CWYC), and 474 to 524 (SCLC…CKIR).

In terms of assembly, interacts with TRX1. Expressed in shoot apical meristem and leaves.

The protein localises to the nucleus. Functionally, probable transcription factor involved in the regulation of floral induction under long day (LD) conditions. Promotes photoperiodic flowering by repressing GHD7, a major floral repressor. Seems to function independently of HD1. The polypeptide is PHD finger protein EHD3 (Oryza sativa subsp. japonica (Rice)).